Here is a 160-residue protein sequence, read N- to C-terminus: MSAPRKTRLYAILAVVCGAVLTIALMLYALSSNIDLFYTPSEILYGKNETQEKPAIGQRLRVGGMVMPGSVRRDSQSLEVRFTVYDAKGSVDVTYNGMLPDLFREGQGVVAQGILDTDDHIAAKEVLARHDENYTPPEIKAAMEGQNGHAPAAGPEGKRL.

The Cytoplasmic portion of the chain corresponds to 1-8 (MSAPRKTR). Residues 9-29 (LYAILAVVCGAVLTIALMLYA) form a helical; Signal-anchor for type II membrane protein membrane-spanning segment. At 30 to 160 (LSSNIDLFYT…PAAGPEGKRL (131 aa)) the chain is on the periplasmic side. The heme site is built by H130 and Y134.

It belongs to the CcmE/CycJ family.

The protein resides in the cell inner membrane. Heme chaperone required for the biogenesis of c-type cytochromes. Transiently binds heme delivered by CcmC and transfers the heme to apo-cytochromes in a process facilitated by CcmF and CcmH. This chain is Cytochrome c-type biogenesis protein CcmE, found in Pectobacterium atrosepticum (strain SCRI 1043 / ATCC BAA-672) (Erwinia carotovora subsp. atroseptica).